The chain runs to 396 residues: Phosphopentomutase (396 aa).

Mn(2+) contacts are provided by Asp13, Asp288, His293, Asp329, His330, and His341.

It belongs to the phosphopentomutase family. The cofactor is Mn(2+).

It is found in the cytoplasm. The catalysed reaction is 2-deoxy-alpha-D-ribose 1-phosphate = 2-deoxy-D-ribose 5-phosphate. The enzyme catalyses alpha-D-ribose 1-phosphate = D-ribose 5-phosphate. Its pathway is carbohydrate degradation; 2-deoxy-D-ribose 1-phosphate degradation; D-glyceraldehyde 3-phosphate and acetaldehyde from 2-deoxy-alpha-D-ribose 1-phosphate: step 1/2. Functionally, isomerase that catalyzes the conversion of deoxy-ribose 1-phosphate (dRib-1-P) and ribose 1-phosphate (Rib-1-P) to deoxy-ribose 5-phosphate (dRib-5-P) and ribose 5-phosphate (Rib-5-P), respectively. This chain is Phosphopentomutase, found in Clostridium botulinum (strain Alaska E43 / Type E3).